A 435-amino-acid polypeptide reads, in one-letter code: MGSWIPKLLLLQLVLLLTKHADSSSIIKYLPGFEGPLPFELETGYIGVGEEDEDQMFYYFIKSESNPKTDPLLLWLSGGPGCSSFTGLIYENGPLGFKVEAYNGSIPTLVSTTYSWTKVANIIYLDQPVGTGFSYSRNPLADIPSDTGSAKRVDEFLRKWLTKHPEYFSNPFYAGGNSYSGKMVPVIVQEISNGNCIYGKPQIRLQGYVLGSPVTDYDLDRNSRIQFAHGMALISNELYESMKRTCGGNYIFVDPLNTECLELIKDYDNCVSGIYENLILVPKCDLTSPDCHSYRSMLSDYWANNESVRRALKVVEGTTGRWERCKWTLQNNKDIKSSIPYHKKNSIQGYRSLIFSGDHDMLTPYVGTQDWIRSLNYSIIDKWRPWMILDQVAGYTTTYANKMTFATVKGGGHTLDYKPDENSILFKRWISGQLL.

Residues 1–23 (MGSWIPKLLLLQLVLLLTKHADS) form the signal peptide. Intrachain disulfides connect Cys-82–Cys-325, Cys-246–Cys-260, and Cys-284–Cys-291. Asn-103 is a glycosylation site (N-linked (GlcNAc...) asparagine). Ser-178 is an active-site residue. The N-linked (GlcNAc...) asparagine glycan is linked to Asn-305. The active site involves Asp-360. An N-linked (GlcNAc...) asparagine glycan is attached at Asn-376. The active site involves His-413.

This sequence belongs to the peptidase S10 family. Expressed in seedlings, roots and leaves.

The protein resides in the secreted. Functionally, probable carboxypeptidase. This is Serine carboxypeptidase-like 16 (SCPL16) from Arabidopsis thaliana (Mouse-ear cress).